The chain runs to 325 residues: Peroxidase 1 (325 aa).

A signal peptide spans Met-1 to Ala-21. 4 disulfide bridges follow: Cys-35/Cys-113, Cys-68/Cys-73, Cys-119/Cys-321, and Cys-198/Cys-230. The active-site Proton acceptor is the His-66. 5 residues coordinate Ca(2+): Asp-67, Val-70, Gly-72, Asp-74, and Ser-76. Residue Pro-161 coordinates substrate. His-191 serves as a coordination point for heme b. Thr-192 contributes to the Ca(2+) binding site. An N-linked (GlcNAc...) asparagine glycan is attached at Asn-207. Ca(2+) is bound by residues Asp-242, Ser-245, and Asp-250.

The protein belongs to the peroxidase family. Classical plant (class III) peroxidase subfamily. The cofactor is heme b. It depends on Ca(2+) as a cofactor. In terms of tissue distribution, slightly expressed in roots.

Its subcellular location is the secreted. The enzyme catalyses 2 a phenolic donor + H2O2 = 2 a phenolic radical donor + 2 H2O. In terms of biological role, removal of H(2)O(2), oxidation of toxic reductants, biosynthesis and degradation of lignin, suberization, auxin catabolism, response to environmental stresses such as wounding, pathogen attack and oxidative stress. These functions might be dependent on each isozyme/isoform in each plant tissue. This Arabidopsis thaliana (Mouse-ear cress) protein is Peroxidase 1 (PER1).